The sequence spans 708 residues: Ubiquitin thioesterase ZRANB1 (708 aa).

The RanBP2-type 1 zinc finger occupies 3 to 33 (ERGIKWACEYCTYENWPSAIKCTMCRAQRPS). Residues Cys10, Cys13, Cys24, and Cys27 each coordinate Zn(2+). A disordered region spans residues 38-73 (TEDPFKSGSSDVGRDWDPSSTEGGSSPLICPDSSAR). RanBP2-type zinc fingers lie at residues 84 to 113 (NANK…QRRT) and 149 to 178 (RTQH…PRPN). Zn(2+)-binding residues include Cys90, Cys93, Cys104, Cys107, Cys155, Cys158, Cys169, and Cys172. A disordered region spans residues 200–225 (RARWRGSCSSGNSQRRSPPATKRDSE). Residues 206 to 215 (SCSSGNSQRR) show a composition bias toward polar residues. 2 ANK repeats span residues 260-290 (KKTD…SGGD) and 313-340 (YTLV…QQAA). The tract at residues 392-641 (PTVQEKLFDE…LSAQELGNEE (250 aa)) is TRAF-binding. The OTU domain occupies 432–592 (LYALWNRTAG…RGHFSALVAM (161 aa)). Cys443 acts as the Nucleophile in catalysis. His585 serves as the catalytic Proton acceptor.

It belongs to the peptidase C64 family. In terms of assembly, interacts with TRAF6. Interacts with APC. In terms of tissue distribution, widely expressed.

It localises to the cytoplasm. Its subcellular location is the nucleus. The catalysed reaction is Thiol-dependent hydrolysis of ester, thioester, amide, peptide and isopeptide bonds formed by the C-terminal Gly of ubiquitin (a 76-residue protein attached to proteins as an intracellular targeting signal).. In terms of biological role, ubiquitin thioesterase, which specifically hydrolyzes 'Lys-29'-linked and 'Lys-33'-linked diubiquitin. Also cleaves 'Lys-63'-linked chains, but with 40-fold less efficiency compared to 'Lys-29'-linked ones. Positive regulator of the Wnt signaling pathway that deubiquitinates APC protein, a negative regulator of Wnt-mediated transcription. Acts as a regulator of autophagy by mediating deubiquitination of PIK3C3/VPS34, thereby promoting autophagosome maturation. Plays a role in the regulation of cell morphology and cytoskeletal organization. Required in the stress fiber dynamics and cell migration. The sequence is that of Ubiquitin thioesterase ZRANB1 from Homo sapiens (Human).